Reading from the N-terminus, the 48-residue chain is Cathepsin B (48 aa).

The protein belongs to the peptidase C1 family. In terms of assembly, dimer of a heavy chain and a light chain cross-linked by a disulfide bond.

It localises to the lysosome. The enzyme catalyses Hydrolysis of proteins with broad specificity for peptide bonds. Preferentially cleaves -Arg-Arg-|-Xaa bonds in small molecule substrates (thus differing from cathepsin L). In addition to being an endopeptidase, shows peptidyl-dipeptidase activity, liberating C-terminal dipeptides.. In terms of biological role, thiol protease which is believed to participate in intracellular degradation and turnover of proteins. Has also been implicated in tumor invasion and metastasis. The polypeptide is Cathepsin B (CTSB) (Coturnix japonica (Japanese quail)).